Here is a 199-residue protein sequence, read N- to C-terminus: MLVIGLTGSIGMGKSTTARLFSEAGVPVYDADATVHAIYEGEAAFLVEAAFPGTTVNGKVDREKLSAKVVHDAAAMKRLEQIVHPLLYDYRQAFLQQAERSGAAVAVIDVPLLFETGGERSVDAVVVVTTTPEIQRERILARGNMTSEKLKAIQARQLPDAEKRKRADFVVDTSHGVDAVRTQIREILAAAAKMPRRRS.

One can recognise a DPCK domain in the interval Val3 to Ser199. Gly11–Thr16 is a binding site for ATP.

It belongs to the CoaE family.

It localises to the cytoplasm. It catalyses the reaction 3'-dephospho-CoA + ATP = ADP + CoA + H(+). The protein operates within cofactor biosynthesis; coenzyme A biosynthesis; CoA from (R)-pantothenate: step 5/5. Functionally, catalyzes the phosphorylation of the 3'-hydroxyl group of dephosphocoenzyme A to form coenzyme A. The polypeptide is Dephospho-CoA kinase (Nitrobacter winogradskyi (strain ATCC 25391 / DSM 10237 / CIP 104748 / NCIMB 11846 / Nb-255)).